A 498-amino-acid chain; its full sequence is ATP synthase subunit beta, chloroplastic (498 aa).

Residue 172–179 (GGAGVGKT) coordinates ATP.

The protein belongs to the ATPase alpha/beta chains family. F-type ATPases have 2 components, CF(1) - the catalytic core - and CF(0) - the membrane proton channel. CF(1) has five subunits: alpha(3), beta(3), gamma(1), delta(1), epsilon(1). CF(0) has four main subunits: a(1), b(1), b'(1) and c(9-12).

The protein resides in the plastid. Its subcellular location is the chloroplast thylakoid membrane. It carries out the reaction ATP + H2O + 4 H(+)(in) = ADP + phosphate + 5 H(+)(out). Produces ATP from ADP in the presence of a proton gradient across the membrane. The catalytic sites are hosted primarily by the beta subunits. This Lemna minor (Common duckweed) protein is ATP synthase subunit beta, chloroplastic.